A 2604-amino-acid polypeptide reads, in one-letter code: BEACH domain-containing protein B (2604 aa).

The region spanning 1761–1912 (VGTSEVLTSV…NAKEVGMLIV (152 aa)) is the BEACH-type PH domain. The 291-residue stretch at 1936–2226 (DRRIAMEMAE…QIFRKKHPRR (291 aa)) folds into the BEACH domain. WD repeat units follow at residues 2254–2293 (HSPS…SGGN), 2368–2407 (HHKD…TPEK), 2433–2474 (GHDD…RSLK), 2476–2515 (PSGS…LASS), 2516–2557 (ESNG…KRYN), and 2558–2596 (GAGK…HRKP).

Functionally, may be involved in the suppression of BCHC1 activity. The polypeptide is BEACH domain-containing protein B (Arabidopsis thaliana (Mouse-ear cress)).